The chain runs to 101 residues: Small ribosomal subunit protein eS24 (101 aa).

The protein belongs to the eukaryotic ribosomal protein eS24 family.

This Methanosarcina barkeri (strain Fusaro / DSM 804) protein is Small ribosomal subunit protein eS24.